The following is a 130-amino-acid chain: Fluoride-specific ion channel FluC (130 aa).

The next 4 membrane-spanning stretches (helical) occupy residues 9 to 29 (LAII…TIFL), 39 to 59 (YATF…VTLA), 71 to 91 (LLLA…ALEV), and 104 to 124 (VLYG…GSLI). Residues Gly-79 and Thr-82 each coordinate Na(+).

This sequence belongs to the fluoride channel Fluc/FEX (TC 1.A.43) family.

Its subcellular location is the cell inner membrane. The enzyme catalyses fluoride(in) = fluoride(out). With respect to regulation, na(+) is not transported, but it plays an essential structural role and its presence is essential for fluoride channel function. In terms of biological role, fluoride-specific ion channel. Important for reducing fluoride concentration in the cell, thus reducing its toxicity. The protein is Fluoride-specific ion channel FluC of Synechocystis sp. (strain ATCC 27184 / PCC 6803 / Kazusa).